A 921-amino-acid polypeptide reads, in one-letter code: Dual serine/threonine and tyrosine protein kinase (921 aa).

One can recognise a Protein kinase domain in the interval 645–899 (PKLGRELGRG…PLLGIVEPSL (255 aa)). Residues 651–659 (LGRGQYGVV) and Lys674 each bind ATP. Catalysis depends on Asp770, which acts as the Proton acceptor.

It belongs to the protein kinase superfamily. Ser/Thr protein kinase family.

It localises to the cytoplasm. The protein resides in the cell membrane. It is found in the apical cell membrane. The protein localises to the basolateral cell membrane. Its subcellular location is the cell junction. The enzyme catalyses L-seryl-[protein] + ATP = O-phospho-L-seryl-[protein] + ADP + H(+). It catalyses the reaction L-threonyl-[protein] + ATP = O-phospho-L-threonyl-[protein] + ADP + H(+). The catalysed reaction is L-tyrosyl-[protein] + ATP = O-phospho-L-tyrosyl-[protein] + ADP + H(+). In terms of biological role, may act as a positive regulator of ERK phosphorylation downstream of fibroblast growth factor-receptor activation. May induce both caspase-dependent apoptosis and caspase-independent cell death. May play a role in the embryonic development. This chain is Dual serine/threonine and tyrosine protein kinase (dstyk), found in Takifugu rubripes (Japanese pufferfish).